The sequence spans 485 residues: ATP-dependent 6-phosphofructokinase 7 (485 aa).

Residues Gly101, 164–165, and 189–192 each bind ATP; these read RG and GDGT. Asp190 is a Mg(2+) binding site. Substrate-binding positions include 218-220, 263-265, Glu319, and 374-377; these read TID, MGR, and YMIR. Asp220 functions as the Proton acceptor in the catalytic mechanism. Positions 449–485 are disordered; sequence SFLGPKDTSEEKKELPETPLLDDGAVDIPPVTKEVTK. Residues 455 to 464 are compositionally biased toward basic and acidic residues; the sequence is DTSEEKKELP.

Belongs to the phosphofructokinase type A (PFKA) family. PPi-dependent PFK group II subfamily. Atypical ATP-dependent clade 'X' sub-subfamily. As to quaternary structure, homotetramer. Mg(2+) serves as cofactor. In terms of tissue distribution, expressed in roots, leaves, stems and flowers.

The protein resides in the cytoplasm. The catalysed reaction is beta-D-fructose 6-phosphate + ATP = beta-D-fructose 1,6-bisphosphate + ADP + H(+). It participates in carbohydrate degradation; glycolysis; D-glyceraldehyde 3-phosphate and glycerone phosphate from D-glucose: step 3/4. Its activity is regulated as follows. Allosterically activated by AMP. Functionally, catalyzes the phosphorylation of D-fructose 6-phosphate to fructose 1,6-bisphosphate by ATP, the first committing step of glycolysis. This chain is ATP-dependent 6-phosphofructokinase 7, found in Arabidopsis thaliana (Mouse-ear cress).